The following is a 372-amino-acid chain: uncharacterized protein (372 aa).

2 stretches are compositionally biased toward basic residues: residues 1–11 and 38–48; these read MNKILGLRRAK and RLRRGMQRLSR. Residues 1–127 form a disordered region; the sequence is MNKILGLRRA…NSGTRDTPCW (127 aa). Residues 50–61 are compositionally biased toward basic and acidic residues; sequence GYGDNRRSRGSE. Polar residues predominate over residues 93 to 104; the sequence is GKTSPCGSSGTP.

This is an uncharacterized protein from Psittacid herpesvirus 1 (isolate Amazon parrot/-/97-0001/1997) (PsHV-1).